The primary structure comprises 378 residues: Holliday junction branch migration complex subunit RuvB 1 (378 aa).

A compositionally biased stretch (polar residues) spans 1 to 12 (MAIISSRDTGQN). The disordered stretch occupies residues 1–62 (MAIISSRDTG…PGEAQEESLR (62 aa)). Residues 13–222 (AEGPKRRQQK…FGHVQRLRFY (210 aa)) are large ATPase domain (RuvB-L). Residues Leu-61, Arg-62, Gly-103, Lys-106, Thr-107, Thr-108, 169–171 (EDF), Arg-212, Tyr-222, and Arg-259 each bind ATP. Thr-107 is a binding site for Mg(2+). Positions 223 to 293 (EPHELVQIVL…VAAAALELFQ (71 aa)) are small ATPAse domain (RuvB-S). The segment at 296–378 (PMGLDWIDRK…EAQSPLPLWS (83 aa)) is head domain (RuvB-H). Residues Arg-351 and Arg-356 each coordinate DNA.

This sequence belongs to the RuvB family. Homohexamer. Forms an RuvA(8)-RuvB(12)-Holliday junction (HJ) complex. HJ DNA is sandwiched between 2 RuvA tetramers; dsDNA enters through RuvA and exits via RuvB. An RuvB hexamer assembles on each DNA strand where it exits the tetramer. Each RuvB hexamer is contacted by two RuvA subunits (via domain III) on 2 adjacent RuvB subunits; this complex drives branch migration. In the full resolvosome a probable DNA-RuvA(4)-RuvB(12)-RuvC(2) complex forms which resolves the HJ.

The protein localises to the cytoplasm. The catalysed reaction is ATP + H2O = ADP + phosphate + H(+). Its function is as follows. The RuvA-RuvB-RuvC complex processes Holliday junction (HJ) DNA during genetic recombination and DNA repair, while the RuvA-RuvB complex plays an important role in the rescue of blocked DNA replication forks via replication fork reversal (RFR). RuvA specifically binds to HJ cruciform DNA, conferring on it an open structure. The RuvB hexamer acts as an ATP-dependent pump, pulling dsDNA into and through the RuvAB complex. RuvB forms 2 homohexamers on either side of HJ DNA bound by 1 or 2 RuvA tetramers; 4 subunits per hexamer contact DNA at a time. Coordinated motions by a converter formed by DNA-disengaged RuvB subunits stimulates ATP hydrolysis and nucleotide exchange. Immobilization of the converter enables RuvB to convert the ATP-contained energy into a lever motion, pulling 2 nucleotides of DNA out of the RuvA tetramer per ATP hydrolyzed, thus driving DNA branch migration. The RuvB motors rotate together with the DNA substrate, which together with the progressing nucleotide cycle form the mechanistic basis for DNA recombination by continuous HJ branch migration. Branch migration allows RuvC to scan DNA until it finds its consensus sequence, where it cleaves and resolves cruciform DNA. The polypeptide is Holliday junction branch migration complex subunit RuvB 1 (Synechococcus sp. (strain JA-3-3Ab) (Cyanobacteria bacterium Yellowstone A-Prime)).